Consider the following 301-residue polypeptide: Protoheme IX farnesyltransferase (301 aa).

The next 9 helical transmembrane spans lie at valine 16 to proline 36, isoleucine 41 to isoleucine 61, valine 93 to isoleucine 113, threonine 114 to lysine 134, isoleucine 141 to glycine 161, serine 172 to phenylalanine 192, glutamine 217 to methionine 237, serine 238 to tryptophan 258, and phenylalanine 273 to leucine 293.

Belongs to the UbiA prenyltransferase family. Protoheme IX farnesyltransferase subfamily.

The protein localises to the cell inner membrane. It carries out the reaction heme b + (2E,6E)-farnesyl diphosphate + H2O = Fe(II)-heme o + diphosphate. The protein operates within porphyrin-containing compound metabolism; heme O biosynthesis; heme O from protoheme: step 1/1. In terms of biological role, converts heme B (protoheme IX) to heme O by substitution of the vinyl group on carbon 2 of heme B porphyrin ring with a hydroxyethyl farnesyl side group. In Xylella fastidiosa (strain Temecula1 / ATCC 700964), this protein is Protoheme IX farnesyltransferase.